A 429-amino-acid chain; its full sequence is DNA polymerase delta small subunit (429 aa).

Belongs to the DNA polymerase delta/II small subunit family. Heterodimer with subunits of 125 kDa and 50 kDa.

It localises to the nucleus. It catalyses the reaction DNA(n) + a 2'-deoxyribonucleoside 5'-triphosphate = DNA(n+1) + diphosphate. Functionally, the function of the small subunit is not yet clear. The protein is DNA polymerase delta small subunit (POLD2) of Oryza sativa subsp. japonica (Rice).